We begin with the raw amino-acid sequence, 454 residues long: Type II methyltransferase M.MvaI (454 aa).

The protein belongs to the N(4)/N(6)-methyltransferase family. N(4) subfamily.

It carries out the reaction a 2'-deoxycytidine in DNA + S-adenosyl-L-methionine = an N(4)-methyl-2'-deoxycytidine in DNA + S-adenosyl-L-homocysteine + H(+). An alpha subtype methylase, recognizes the double-stranded sequence 5'-CCWGG-3', methylatES C-2 on both strands, and protects the DNA from cleavage by the MvaI endonuclease. This chain is Type II methyltransferase M.MvaI, found in Kocuria varians (Micrococcus varians).